A 943-amino-acid chain; its full sequence is MTTLGQRDRRPDALGSLSVLPDETICVLLEYLAPRDIAHLACVSSVMYILCNEEPLWMSLCLRRAKGPLEYKGSWKKTTLHLEGVTQENDAYRKCFHFDGFMSLYLYKRFYRCNTSLDGFSFDNGNVERRRNISLDEFSKEYDAKKPVLLSGLADSWPASNTWTIDQLSEKYGEVPFRISQRSPNKISMKFKDYIAYMKTQRDEDPLYVFDDKFGEAAPELLKDYSVPHLFQEDWFEILDKESRPPYRWLIVGPERSGASWHVDPALTSAWNTLLCGRKRWALYPPGKVPLGVTVHVNEDDGDVSIDTPSSLQWWLDYYPLLADEDKPIECTLLPGETIYVPSGWWHCILNLEPTVAVTQNFVNKENFGFVCLDMAPGYHHKGVCRAGLLALDDENSEDLEEETHDEEDNTLSYSDLTRKEKRTRMNGGGETENREEDVNGVSKRYNMWKNGFSYDIDFLASFLDKERDHYNFPWSMGNSVGQREMRAWLSKLWVLKPEMRELIWKGACIALNAEKWLRCLEEVCTFHNLPLVTEDEKLPVGTGSNPVYLLSDYAIKLFVEGGLEQSMYGLGTELEFYDILGRADSPLKTHIPEVLASGILFFEKGSYKVVPWDGKRIPDIISSSSFDFDASMLNSEFPFGIWNKTLREHKNQGKPAPDSFGSLSSHVWPYIITKRCKGKIFAQLRDDLTWNDAQNLAFFLGQQLRNLHLLPYPPVTRPELLNVNAVHEELNIPAEWKVFVDALCQKKKDVTSRLENWGNPIPRALMTKIDEYIPDDFFVDLLHVFKETNGGDEIKPCTWIHSDVMDDNIHMEPYADDSVDGQHNSWRPSHILDFSDLTIGDPICDLIPIYLDVFRGDADLLKKLLENYGLPLIRSRSSENGTTKTADSTRKKVLSPSYRTMCYCILHEENVLGSIFSIWDELRTAESWEQVEQTVWSLLNTY.

In terms of domain architecture, F-box spans 14–60 (LGSLSVLPDETICVLLEYLAPRDIAHLACVSSVMYILCNEEPLWMSL). Residues 216-379 (EAAPELLKDY…FVCLDMAPGY (164 aa)) form the JmjC domain. Fe cation-binding residues include H262, D264, and H347. A compositionally biased stretch (acidic residues) spans 396–410 (NSEDLEEETHDEEDN). The interval 396–438 (NSEDLEEETHDEEDNTLSYSDLTRKEKRTRMNGGGETENREED) is disordered.

This sequence belongs to the JARID1 histone demethylase family. It depends on Fe(2+) as a cofactor. As to expression, mostly expressed in leaves, and, to a lower extent, in inflorescences, roots, siliques and stems.

It is found in the nucleus. Its function is as follows. May function as histone H3 lysine demethylase and be involved in regulation of gene expression. The protein is Lysine-specific demethylase JMJ21 of Arabidopsis thaliana (Mouse-ear cress).